Here is a 135-residue protein sequence, read N- to C-terminus: UPF0306 protein C8J_1355 (135 aa).

Belongs to the UPF0306 family.

This Campylobacter jejuni subsp. jejuni serotype O:6 (strain 81116 / NCTC 11828) protein is UPF0306 protein C8J_1355.